A 285-amino-acid polypeptide reads, in one-letter code: Type II secretion system protein C (285 aa).

Residues 1–27 lie on the Cytoplasmic side of the membrane; the sequence is MSKGIKMHNSVMRLTIPNKKIINYAPH. A helical membrane pass occupies residues 28-46; the sequence is IVTSIILFFICQQLAQLTW. The Periplasmic segment spans residues 47-285; it reads KIILPVNFTD…NDIYLALRDE (239 aa).

The protein belongs to the GSP C family.

It localises to the cell inner membrane. Involved in a type II secretion system (T2SS, formerly general secretion pathway, GSP) for the export of proteins. Required for the translocation of pullulanase. This Klebsiella pneumoniae protein is Type II secretion system protein C (pulC).